We begin with the raw amino-acid sequence, 55 residues long: Large ribosomal subunit protein bL33 (55 aa).

Belongs to the bacterial ribosomal protein bL33 family.

This chain is Large ribosomal subunit protein bL33, found in Zymomonas mobilis subsp. mobilis (strain ATCC 31821 / ZM4 / CP4).